The primary structure comprises 168 residues: Thiosulfate dehydrogenase [quinone] small subunit (168 aa).

The chain crosses the membrane as a helical span at residues 6–26 (IIGIIFAILVVGWILATGQWA).

Heterodimer of a large and a small subunit in a 2:2 stoichiometry. TQO may associate with the terminal oxidase formed by doxBCE. In terms of processing, the N-terminus is blocked. Glycosylated.

Its subcellular location is the cell membrane. The catalysed reaction is 6-decylubiquinone + 2 thiosulfate = 6-decylubiquinol + tetrathionate. Its activity is regulated as follows. Inhibited by sulfite, metabisulfite and dithonite. TQO plays a role in sulfur oxidation and is proposed to couple sulfur oxidation to dioxygen reduction; caldariellaquinone or sulfolobus quinone seem to serve to transfer electrons to the electron transport chain terminal oxidase formed by DoxBCE. This chain is Thiosulfate dehydrogenase [quinone] small subunit (doxA), found in Acidianus ambivalens (Desulfurolobus ambivalens).